Consider the following 193-residue polypeptide: PBAN-type neuropeptides (193 aa).

The first 19 residues, 1-19, serve as a signal peptide directing secretion; sequence MYGAVLPGLFFIFISCVVA. The residue at position 46 (Ile-46) is an Isoleucine amide. A leucine amide mark is found at Leu-102 and Leu-122. The disordered stretch occupies residues 124 to 158; sequence RRLADDTPATPADQEMYRPDPEQIDSRTKYFSPRL. Over residues 138–151 the composition is skewed to basic and acidic residues; sequence EMYRPDPEQIDSRT. Leu-158 and Leu-168 each carry leucine amide. Residues 186-193 constitute a propeptide that is removed on maturation; it reads STNKTQST.

This sequence belongs to the pyrokinin family. Expressed in the mandibular, maxillary and labial neuromeres of the male and female brain-subesophageal ganglions, in the corpora cardiaca and all around the corpora allata, and at a lower level in the brain near the calyx and pedunculus of the mushroom body (at protein level). Expressed in larvae and adult of both sexes (at protein level). In terms of tissue distribution, expressed in corpora cardiaca (CC), corpora allata (CA) and gnathal ganglion (GNG) (at protein level). Expression in CC and CA detected in most animals, in GNG in some (at protein level). As to expression, expression not detected in CC, CA, AL or GNG (at protein level). Expressed in corpora cardiaca (CC), corpora allata (CA), antennal lobe (AL) and gnathal ganglion (GNG) (at protein level). Expression in CC, CA and GNG detected in most animals, expression in AL detected in few (at protein level). In terms of tissue distribution, expressed in corpora cardiaca (CC), corpora allata (CA), antennal lobe (AL) and gnathal ganglion (GNG) (at protein level). Expression in CC, CA and GNG detected in all animals, expression in AL detected in some (at protein level). As to expression, expressed in corpora cardiaca (CC), corpora allata (CA), antennal lobe (AL) and gnathal ganglion (GNG) (at protein level). Expression in CC, CA and GNG detected in most animals, expression in AL detected in some animals (at protein level).

It localises to the secreted. Its function is as follows. A hormone that controls sex pheromone production in female moths and pheromone responsiveness in male. This chain is PBAN-type neuropeptides, found in Agrotis ipsilon (Black cutworm moth).